The chain runs to 39 residues: Cytochrome b559 subunit beta (39 aa).

Residues 14-30 (WLAVHGLAVPTVFFLGS) form a helical membrane-spanning segment. Residue His-18 coordinates heme.

This sequence belongs to the PsbE/PsbF family. Heterodimer of an alpha subunit and a beta subunit. PSII is composed of 1 copy each of membrane proteins PsbA, PsbB, PsbC, PsbD, PsbE, PsbF, PsbH, PsbI, PsbJ, PsbK, PsbL, PsbM, PsbT, PsbX, PsbY, PsbZ, Psb30/Ycf12, at least 3 peripheral proteins of the oxygen-evolving complex and a large number of cofactors. It forms dimeric complexes. The cofactor is heme b.

The protein localises to the plastid. It localises to the chloroplast thylakoid membrane. Functionally, this b-type cytochrome is tightly associated with the reaction center of photosystem II (PSII). PSII is a light-driven water:plastoquinone oxidoreductase that uses light energy to abstract electrons from H(2)O, generating O(2) and a proton gradient subsequently used for ATP formation. It consists of a core antenna complex that captures photons, and an electron transfer chain that converts photonic excitation into a charge separation. The polypeptide is Cytochrome b559 subunit beta (Nicotiana glutinosa (Tobacco)).